The primary structure comprises 409 residues: Tyrosine--tRNA ligase (409 aa).

The 'HIGH' region motif lies at 54-63 (PTAPDIHLGH). The 'KMSKS' region signature appears at 238 to 242 (KMSKS). Lysine 241 lines the ATP pocket. An S4 RNA-binding domain is found at 347–407 (QGILRILREA…GKRKFARVKL (61 aa)).

This sequence belongs to the class-I aminoacyl-tRNA synthetase family. TyrS type 2 subfamily. In terms of assembly, homodimer.

The protein resides in the cytoplasm. It carries out the reaction tRNA(Tyr) + L-tyrosine + ATP = L-tyrosyl-tRNA(Tyr) + AMP + diphosphate + H(+). Catalyzes the attachment of tyrosine to tRNA(Tyr) in a two-step reaction: tyrosine is first activated by ATP to form Tyr-AMP and then transferred to the acceptor end of tRNA(Tyr). This Bordetella pertussis (strain Tohama I / ATCC BAA-589 / NCTC 13251) protein is Tyrosine--tRNA ligase.